We begin with the raw amino-acid sequence, 148 residues long: 3-dehydroquinate dehydratase (148 aa).

The Proton acceptor role is filled by Y23. Residues N75, H81, and D88 each contribute to the substrate site. H101 functions as the Proton donor in the catalytic mechanism. Substrate contacts are provided by residues 102–103 and R112; that span reads LS.

This sequence belongs to the type-II 3-dehydroquinase family. Homododecamer.

The catalysed reaction is 3-dehydroquinate = 3-dehydroshikimate + H2O. It functions in the pathway metabolic intermediate biosynthesis; chorismate biosynthesis; chorismate from D-erythrose 4-phosphate and phosphoenolpyruvate: step 3/7. Its function is as follows. Catalyzes a trans-dehydration via an enolate intermediate. The sequence is that of 3-dehydroquinate dehydratase from Xanthomonas oryzae pv. oryzae (strain MAFF 311018).